Reading from the N-terminus, the 445-residue chain is Retrovirus-related Pol polyprotein from type-1 retrotransposable element R2 (445 aa).

Positions 1-114 constitute a Reverse transcriptase domain; that stretch reads QPSVFNLVKW…LSRDDSLAKA (114 aa). Residues 115–445 are nucleic acid-binding endonuclease; that stretch reads MLASAGPAAE…GATPRQLIEY (331 aa). A compositionally biased stretch (basic residues) spans 380 to 389; that stretch reads GPRPAHHHQP. The disordered stretch occupies residues 380–445; that stretch reads GPRPAHHHQP…GATPRQLIEY (66 aa). The span at 396 to 405 shows a compositional bias: polar residues; the sequence is ATANTGTLQS.

The catalysed reaction is DNA(n) + a 2'-deoxyribonucleoside 5'-triphosphate = DNA(n+1) + diphosphate. The protein is Retrovirus-related Pol polyprotein from type-1 retrotransposable element R2 of Popillia japonica (Japanese beetle).